Consider the following 236-residue polypeptide: Phosphoribosylaminoimidazole-succinocarboxamide synthase (236 aa).

This sequence belongs to the SAICAR synthetase family.

It carries out the reaction 5-amino-1-(5-phospho-D-ribosyl)imidazole-4-carboxylate + L-aspartate + ATP = (2S)-2-[5-amino-1-(5-phospho-beta-D-ribosyl)imidazole-4-carboxamido]succinate + ADP + phosphate + 2 H(+). It participates in purine metabolism; IMP biosynthesis via de novo pathway; 5-amino-1-(5-phospho-D-ribosyl)imidazole-4-carboxamide from 5-amino-1-(5-phospho-D-ribosyl)imidazole-4-carboxylate: step 1/2. In Rickettsia africae (strain ESF-5), this protein is Phosphoribosylaminoimidazole-succinocarboxamide synthase.